Reading from the N-terminus, the 116-residue chain is UPF0342 protein lhv_1666 (116 aa).

The protein belongs to the UPF0342 family.

The polypeptide is UPF0342 protein lhv_1666 (Lactobacillus helveticus (strain DPC 4571)).